Consider the following 237-residue polypeptide: Ribonuclease 3 (237 aa).

In terms of domain architecture, RNase III spans 3 to 133 (SRQPLLDALG…LLGAIYLQHG (131 aa)). Residue Glu43 coordinates Mg(2+). Asp47 is a catalytic residue. The Mg(2+) site is built by Asp119 and Glu122. Glu122 is an active-site residue. Positions 160–228 (DWKTSLQELT…AAATWKALDV (69 aa)) constitute a DRBM domain.

Belongs to the ribonuclease III family. As to quaternary structure, homodimer. It depends on Mg(2+) as a cofactor.

Its subcellular location is the cytoplasm. The enzyme catalyses Endonucleolytic cleavage to 5'-phosphomonoester.. In terms of biological role, digests double-stranded RNA. Involved in the processing of primary rRNA transcript to yield the immediate precursors to the large and small rRNAs (23S and 16S). Processes some mRNAs, and tRNAs when they are encoded in the rRNA operon. Processes pre-crRNA and tracrRNA of type II CRISPR loci if present in the organism. This Mycolicibacterium paratuberculosis (strain ATCC BAA-968 / K-10) (Mycobacterium paratuberculosis) protein is Ribonuclease 3.